Consider the following 75-residue polypeptide: Lipid-anchored plasma membrane protein CPP2 (75 aa).

The segment at Met-1–Val-43 is disordered. A run of 3 repeats spans residues Gln-4–Pro-13, Gln-14–Pro-23, and Gln-24–Pro-33. Residues Gln-4 to Pro-33 form a 3 X 10 AA tandem repeats of Q-Q-G-Y-Y-Q-Q-G-P-P region.

It belongs to the CYSTM1 family. Palmitoylated near the C-terminus.

It localises to the cell membrane. This is Lipid-anchored plasma membrane protein CPP2 from Saccharomyces cerevisiae (strain ATCC 204508 / S288c) (Baker's yeast).